Reading from the N-terminus, the 185-residue chain is Signal peptidase complex subunit 3 (185 aa).

Residues 1–16 (MHTSIQRIQQTFSQAS) are Cytoplasmic-facing. Residues 17–37 (TVLSIIAAIVFVVSYIQLVVA) traverse the membrane as a helical; Signal-anchor for type II membrane protein segment. The Lumenal portion of the chain corresponds to 38-185 (NVWSLPEANF…KGSIKFPQLV (148 aa)). A glycan (N-linked (GlcNAc...) asparagine) is linked at asparagine 151.

The protein belongs to the SPCS3 family. In terms of assembly, component of the signal peptidase complex (SPC) composed of a catalytic subunit SEC11 and three accessory subunits SPC1, SPC2 and SPC3. The complex induces a local thinning of the ER membrane which is used to measure the length of the signal peptide (SP) h-region of protein substrates. This ensures the selectivity of the complex towards h-regions shorter than 18-20 amino acids. SPC associates with the translocon complex.

It is found in the endoplasmic reticulum membrane. Functionally, essential component of the signal peptidase complex (SPC) which catalyzes the cleavage of N-terminal signal sequences from nascent proteins as they are translocated into the lumen of the endoplasmic reticulum. Essential for the SPC catalytic activity, possibly by stabilizing and positioning the active center of the complex close to the lumenal surface. Essential for viability. The chain is Signal peptidase complex subunit 3 (SPC3) from Yarrowia lipolytica (strain CLIB 122 / E 150) (Yeast).